Reading from the N-terminus, the 185-residue chain is GTP cyclohydrolase 1 (185 aa).

Cys-76, His-79, and Cys-147 together coordinate Zn(2+).

The protein belongs to the GTP cyclohydrolase I family. Toroid-shaped homodecamer, composed of two pentamers of five dimers.

The enzyme catalyses GTP + H2O = 7,8-dihydroneopterin 3'-triphosphate + formate + H(+). The protein operates within cofactor biosynthesis; 7,8-dihydroneopterin triphosphate biosynthesis; 7,8-dihydroneopterin triphosphate from GTP: step 1/1. This chain is GTP cyclohydrolase 1, found in Clostridium perfringens (strain ATCC 13124 / DSM 756 / JCM 1290 / NCIMB 6125 / NCTC 8237 / Type A).